Here is a 309-residue protein sequence, read N- to C-terminus: Probable manganese-dependent inorganic pyrophosphatase (309 aa).

Mn(2+)-binding residues include His-9, Asp-13, Asp-15, Asp-75, His-97, and Asp-149.

It belongs to the PPase class C family. The cofactor is Mn(2+).

The protein localises to the cytoplasm. It carries out the reaction diphosphate + H2O = 2 phosphate + H(+). The polypeptide is Probable manganese-dependent inorganic pyrophosphatase (Bacillus licheniformis (strain ATCC 14580 / DSM 13 / JCM 2505 / CCUG 7422 / NBRC 12200 / NCIMB 9375 / NCTC 10341 / NRRL NRS-1264 / Gibson 46)).